A 369-amino-acid chain; its full sequence is NAD(P)H-quinone oxidoreductase subunit 1, chloroplastic (369 aa).

Helical transmembrane passes span 25–45 (FGFIWIITPILTYTLGVTIGI), 104–124 (VMVVVPVFLSYLVIPLGHGII), 130–150 (IGVFFWIAVSSVAPLGLLTAG), 270–290 (LSATILYLGGWNSPIPFLFLP), and 306–326 (VISITIAIIITLAKAYSFLFI).

Belongs to the complex I subunit 1 family. NDH is composed of at least 16 different subunits, 5 of which are encoded in the nucleus.

It is found in the plastid. Its subcellular location is the chloroplast thylakoid membrane. The catalysed reaction is a plastoquinone + NADH + (n+1) H(+)(in) = a plastoquinol + NAD(+) + n H(+)(out). It catalyses the reaction a plastoquinone + NADPH + (n+1) H(+)(in) = a plastoquinol + NADP(+) + n H(+)(out). In terms of biological role, NDH shuttles electrons from NAD(P)H:plastoquinone, via FMN and iron-sulfur (Fe-S) centers, to quinones in the photosynthetic chain and possibly in a chloroplast respiratory chain. The immediate electron acceptor for the enzyme in this species is believed to be plastoquinone. Couples the redox reaction to proton translocation, and thus conserves the redox energy in a proton gradient. This chain is NAD(P)H-quinone oxidoreductase subunit 1, chloroplastic, found in Huperzia lucidula (Shining clubmoss).